The sequence spans 378 residues: Cytochrome b (378 aa).

The next 4 membrane-spanning stretches (helical) occupy residues phenylalanine 34–methionine 54, tryptophan 78–valine 99, tryptophan 114–leucine 134, and phenylalanine 179–leucine 199. Heme b is bound by residues histidine 84 and histidine 98. Heme b is bound by residues histidine 183 and histidine 197. Residue histidine 202 coordinates a ubiquinone. The next 4 membrane-spanning stretches (helical) occupy residues tyrosine 227 to phenylalanine 247, leucine 289 to histidine 309, leucine 321 to alanine 341, and tyrosine 348 to leucine 368.

The protein belongs to the cytochrome b family. The main subunits of complex b-c1 are: cytochrome b, cytochrome c1 and the Rieske protein. Heme b is required as a cofactor.

The protein localises to the mitochondrion inner membrane. Functionally, component of the ubiquinol-cytochrome c reductase complex (complex III or cytochrome b-c1 complex) that is part of the mitochondrial respiratory chain. The b-c1 complex mediates electron transfer from ubiquinol to cytochrome c. Contributes to the generation of a proton gradient across the mitochondrial membrane that is then used for ATP synthesis. The chain is Cytochrome b (mt:Cyt-b) from Anopheles gambiae (African malaria mosquito).